The following is a 367-amino-acid chain: CCN family member 4 (367 aa).

An N-terminal signal peptide occupies residues 1 to 22; the sequence is MRWLLPWTLAAVAVLRVGNILA. The IGFBP N-terminal domain maps to 45 to 118; it reads RPEFCKWPCE…RYAIGVCAQV (74 aa). 4 cysteine pairs are disulfide-bonded: C49–C73, C53–C75, C55–C76, and C62–C79. N86 is a glycosylation site (N-linked (GlcNAc...) asparagine). Cystine bridges form between C87–C101 and C93–C115. Residues 121–186 enclose the VWFC domain; sequence VGCVLDGVRY…GQCCEQWVCD (66 aa). A glycan (N-linked (GlcNAc...) asparagine) is linked at N143. In terms of domain architecture, TSP type-1 spans 215 to 260; it reads NCIAYTSPWSPCSTTCGLGISTRISNVNARCWPEQESRLCNLRPCD. Disulfide bonds link C273-C310, C290-C324, C301-C340, C304-C342, and C309-C346. In terms of domain architecture, CTCK spans 273–347; that stretch reads CLAVYQPEEA…NACFCNLSCR (75 aa). The N-linked (GlcNAc...) asparagine glycan is linked to N284. A glycan (N-linked (GlcNAc...) asparagine) is linked at N343.

The protein belongs to the CCN family. In terms of tissue distribution, highly expressed in kidney and lung. Lower levels in heart, brain, spleen, liver, skeletal muscle and testis. Expressed in low metastatic melanoma cells.

It localises to the secreted. Its function is as follows. Downstream regulator in the Wnt/Frizzled-signaling pathway. Associated with cell survival. Adheres to skin and melanoma fibroblasts. In vitro binding to skin fibroblasts occurs through the proteoglycans, decorin and biglycan. Suppresses tumor growth in vivo. The polypeptide is CCN family member 4 (Ccn4) (Mus musculus (Mouse)).